The sequence spans 473 residues: Kremen protein 1 (473 aa).

A signal peptide spans 1-19 (MAPPAARLALLSAAALTLA). Topologically, residues 21-392 (RPAPSPGLGP…AGSHRVEGWT (372 aa)) are extracellular. The 84-residue stretch at 31-114 (ECFTANGADY…YWKYCEIPAC (84 aa)) folds into the Kringle domain. Disulfide bonds link Cys32–Cys114, Cys55–Cys95, Cys84–Cys109, Cys122–Cys186, Cys147–Cys167, Cys151–Cys169, Cys190–Cys198, and Cys214–Cys240. N-linked (GlcNAc...) asparagine glycosylation is found at Asn45 and Asn59. The 95-residue stretch at 116–210 (MPGNLGCYKD…DGRIILFDTL (95 aa)) folds into the WSC domain. The 108-residue stretch at 214–321 (CGGNYSAMSS…QGFAVLYQAV (108 aa)) folds into the CUB domain. Asn217, Asn293, Asn333, and Asn345 each carry an N-linked (GlcNAc...) asparagine glycan. A helical transmembrane segment spans residues 393 to 413 (VYGLATLLILTVTAIVAKILL). Topologically, residues 414–473 (HVTFKSHRVPASGDLRDCHQPGTSGEIWSIFYKPSTSISIFKKKLKGQSQQDDRNPLVSD) are cytoplasmic. The essential for apoptotic activity stretch occupies residues 414–473 (HVTFKSHRVPASGDLRDCHQPGTSGEIWSIFYKPSTSISIFKKKLKGQSQQDDRNPLVSD).

In terms of assembly, forms a ternary complex with DKK1 and LRP6. Interacts with LRP6 in a DKK1-dependent manner. Interacts with DKK1 and RSPO1 (via FU repeats).

Its subcellular location is the cell membrane. Functionally, receptor for Dickkopf proteins. Cooperates with DKK1/2 to inhibit Wnt/beta-catenin signaling by promoting the endocytosis of Wnt receptors LRP5 and LRP6. In the absence of DKK1, potentiates Wnt-beta-catenin signaling by maintaining LRP5 or LRP6 at the cell membrane. Can trigger apoptosis in a Wnt-independent manner and this apoptotic activity is inhibited upon binding of the ligand DKK1. Plays a role in limb development; attenuates Wnt signaling in the developing limb to allow normal limb patterning and can also negatively regulate bone formation. Modulates cell fate decisions in the developing cochlea with an inhibitory role in hair cell fate specification. The polypeptide is Kremen protein 1 (KREMEN1) (Homo sapiens (Human)).